A 483-amino-acid polypeptide reads, in one-letter code: Acetyltransferase AOL_s00215g273 (483 aa).

The next 8 membrane-spanning stretches (helical) occupy residues 9–29, 33–53, 141–161, 191–211, 292–312, 334–354, 372–392, and 453–473; these read ALIG…TSFV, IYPL…TEGL, VAYI…LYTC, IFQM…SVLV, FLVF…VYYG, VTGY…FICW, WFVG…VLWI, and LGGY…GSGF.

The protein belongs to the wax synthase family.

It is found in the membrane. The protein operates within secondary metabolite biosynthesis; terpenoid biosynthesis. Functionally, acetyltransferase; part of the gene cluster that mediates the biosynthesis of sesquiterpenyl epoxy-cyclohexenoids (SECs) such as anthrobotrisins and arthrosporols, metabolites that possess a novel hybrid carbon skeleton consisting of a polyketide-derived epoxycyclohexenol combined with a terpenoid-derived monocyclic sesquiterpenol substructure (PKS-PTS hybrid). The SEC pathway plays an important role for fungal soil colonization via decreasing fungal nematode-capturing ability. The role of the acetyltransferase in SEC biosynthesis has still to be determined. The pathway begins with the biosynthesis of 6-methylsalicylic acid (6-MSA), the first precursor of the polyketide-derived epoxycyclohexenol in arthrosporols, by the polyketide synthase (PKS) AOL_s00215g283 via condensation of 1 acetate and 3 malonate units. The 6-methylsalicylic acid decarboxylase AOL_s00215g281 then catalyzes the decarboxylation of 6-methylsalicylic acid to yield m-cresol. The cytochrome P450 monooxygenase AOL_s00215g282 further oxidizes m-cresol to yield toluquinol. With the assistance of the oxidoreductase AOL_s00215g277, the polyprenyl transferase AOL_s00215g276 catalyzes the farnesylation of toluquinol to produce farnesyl hydroquinone, the hybrid precursor for biosynthesis of SECs. Farnesyl hydroquinone undergoes epoxidation and then subsequent dehydrogenation to form farnesyl epoxy-quinone, the first and simplest SEC. The cytochrome P450 monooxygenase AOL_s00215g278 and the FAD-dependent monooxygenase AOL_s00215g279 might be involved in the oxygenation of the phenol moiety, most likely in the epoxy formation. The cytochrome P450 monooxygenases AOL_s00215g274 and AOL_s00215g280 are involved in specific regional ketone reductions at respectively C-4 and C-1 of farnesyl epoxy-quinone PubMed:33823587. The sequence is that of Acetyltransferase AOL_s00215g273 from Arthrobotrys oligospora (strain ATCC 24927 / CBS 115.81 / DSM 1491) (Nematode-trapping fungus).